A 503-amino-acid chain; its full sequence is Cytosolic carboxypeptidase 6 (503 aa).

The region spanning tyrosine 167 to tyrosine 438 is the Peptidase M14 domain. Histidine 230, glutamate 233, and histidine 328 together coordinate Zn(2+). The Proton donor/acceptor role is filled by glutamate 401. Basic and acidic residues-rich tracts occupy residues isoleucine 459–proline 469 and lysine 487–phenylalanine 503. The segment at isoleucine 459–phenylalanine 503 is disordered.

Belongs to the peptidase M14 family. Interacts with MYLK. Requires Zn(2+) as cofactor.

It localises to the cytoplasm. Its subcellular location is the cytosol. The protein resides in the cytoskeleton. It is found in the microtubule organizing center. The protein localises to the centrosome. It localises to the centriole. Its subcellular location is the golgi apparatus. The protein resides in the cilium basal body. The enzyme catalyses (L-glutamyl)(n+1)-gamma-L-glutamyl-L-glutamyl-[protein] + H2O = (L-glutamyl)(n)-gamma-L-glutamyl-L-glutamyl-[protein] + L-glutamate. It carries out the reaction C-terminal L-alpha-aminoacyl-L-glutamyl-L-glutamyl-[tubulin] + H2O = C-terminal L-alpha-aminoacyl-L-glutamyl-[tubulin] + L-glutamate. In terms of biological role, metallocarboxypeptidase that mediates protein deglutamylation of tubulin and non-tubulin target proteins. Catalyzes the removal of polyglutamate side chains present on the gamma-carboxyl group of glutamate residues within the C-terminal tail of tubulin protein. Specifically cleaves tubulin long-side-chains, while it is not able to remove the branching point glutamate. Also catalyzes the removal of polyglutamate residues from the carboxy-terminus of non-tubulin proteins such as MYLK. Mediates the deglutamylation of nucleotidyltransferase CGAS, leading to CGAS antiviral defense response activation. Involved in KLF4 deglutamylation which promotes KLF4 proteasome-mediated degradation, thereby negatively regulating cell pluripotency maintenance and embryogenesis. This is Cytosolic carboxypeptidase 6 from Homo sapiens (Human).